We begin with the raw amino-acid sequence, 412 residues long: Serine hydroxymethyltransferase (412 aa).

(6S)-5,6,7,8-tetrahydrofolate is bound by residues Leu117 and 121 to 123 (GHL). Lys226 is subject to N6-(pyridoxal phosphate)lysine. (6S)-5,6,7,8-tetrahydrofolate contacts are provided by residues Glu242 and 350–352 (SPF).

This sequence belongs to the SHMT family. Homodimer. Pyridoxal 5'-phosphate is required as a cofactor.

It localises to the cytoplasm. It catalyses the reaction (6R)-5,10-methylene-5,6,7,8-tetrahydrofolate + glycine + H2O = (6S)-5,6,7,8-tetrahydrofolate + L-serine. It functions in the pathway one-carbon metabolism; tetrahydrofolate interconversion. The protein operates within amino-acid biosynthesis; glycine biosynthesis; glycine from L-serine: step 1/1. Catalyzes the reversible interconversion of serine and glycine with tetrahydrofolate (THF) serving as the one-carbon carrier. Appears to be specific for THF as the pteridine substrate, since the use of tetrahydromethanopterin (H4MPT) is much less efficient. Also exhibits THF-independent aldolase activity toward beta-hydroxyamino acids, producing glycine and aldehydes, via a retro-aldol mechanism. Thus, is able to catalyze the cleavage of L-allo-threonine and L-threo-beta-phenylserine. This chain is Serine hydroxymethyltransferase, found in Methanosarcina barkeri (strain Fusaro / DSM 804).